Reading from the N-terminus, the 496-residue chain is Glutamyl-tRNA(Gln) amidotransferase subunit A (496 aa).

Catalysis depends on charge relay system residues Lys75 and Ser150. The Acyl-ester intermediate role is filled by Ser174.

It belongs to the amidase family. GatA subfamily. Heterotrimer of A, B and C subunits.

It carries out the reaction L-glutamyl-tRNA(Gln) + L-glutamine + ATP + H2O = L-glutaminyl-tRNA(Gln) + L-glutamate + ADP + phosphate + H(+). Allows the formation of correctly charged Gln-tRNA(Gln) through the transamidation of misacylated Glu-tRNA(Gln) in organisms which lack glutaminyl-tRNA synthetase. The reaction takes place in the presence of glutamine and ATP through an activated gamma-phospho-Glu-tRNA(Gln). In Burkholderia cenocepacia (strain HI2424), this protein is Glutamyl-tRNA(Gln) amidotransferase subunit A.